The chain runs to 419 residues: D-amino acid dehydrogenase (419 aa).

An FAD-binding site is contributed by 3-17 (VLVLGAGVAGVSSVW).

This sequence belongs to the DadA oxidoreductase family. It depends on FAD as a cofactor.

It catalyses the reaction a D-alpha-amino acid + A + H2O = a 2-oxocarboxylate + AH2 + NH4(+). It participates in amino-acid degradation; D-alanine degradation; NH(3) and pyruvate from D-alanine: step 1/1. Oxidative deamination of D-amino acids. In Neisseria gonorrhoeae (strain ATCC 700825 / FA 1090), this protein is D-amino acid dehydrogenase.